The chain runs to 306 residues: N-acetylmuramic acid 6-phosphate etherase (306 aa).

The SIS domain maps to 55-218; that stretch reads AAATLLAGGR…STGAMIKIGK (164 aa). Glutamate 83 functions as the Proton donor in the catalytic mechanism. Glutamate 114 is a catalytic residue.

It belongs to the GCKR-like family. MurNAc-6-P etherase subfamily. In terms of assembly, homodimer.

It catalyses the reaction N-acetyl-D-muramate 6-phosphate + H2O = N-acetyl-D-glucosamine 6-phosphate + (R)-lactate. It participates in amino-sugar metabolism; 1,6-anhydro-N-acetylmuramate degradation. The protein operates within amino-sugar metabolism; N-acetylmuramate degradation. Its pathway is cell wall biogenesis; peptidoglycan recycling. Its function is as follows. Specifically catalyzes the cleavage of the D-lactyl ether substituent of MurNAc 6-phosphate, producing GlcNAc 6-phosphate and D-lactate. Together with AnmK, is also required for the utilization of anhydro-N-acetylmuramic acid (anhMurNAc) either imported from the medium or derived from its own cell wall murein, and thus plays a role in cell wall recycling. The protein is N-acetylmuramic acid 6-phosphate etherase of Erwinia tasmaniensis (strain DSM 17950 / CFBP 7177 / CIP 109463 / NCPPB 4357 / Et1/99).